Here is a 533-residue protein sequence, read N- to C-terminus: D-3-phosphoglycerate dehydrogenase (533 aa).

A2 carries the post-translational modification N-acetylalanine. Position 14 is a phosphoserine (S14). Position 21 is an N6-acetyllysine; alternate (K21). A Glycyl lysine isopeptide (Lys-Gly) (interchain with G-Cter in SUMO1); alternate cross-link involves residue K21. K21 participates in a covalent cross-link: Glycyl lysine isopeptide (Lys-Gly) (interchain with G-Cter in SUMO2); alternate. Position 58 is an N6-acetyllysine (K58). Residues T78, 155–156 (RI), D175, T207, 234–236 (CAR), and D260 contribute to the NAD(+) site. T78 bears the Phosphothreonine mark. The active site involves R236. E265 is a catalytic residue. H283 acts as the Proton donor in catalysis. Residue 283 to 286 (HLGA) participates in NAD(+) binding.

Belongs to the D-isomer specific 2-hydroxyacid dehydrogenase family. As to quaternary structure, homotetramer.

The catalysed reaction is (2R)-3-phosphoglycerate + NAD(+) = 3-phosphooxypyruvate + NADH + H(+). It carries out the reaction (R)-2-hydroxyglutarate + NAD(+) = 2-oxoglutarate + NADH + H(+). It catalyses the reaction (S)-malate + NAD(+) = oxaloacetate + NADH + H(+). It functions in the pathway amino-acid biosynthesis; L-serine biosynthesis; L-serine from 3-phospho-D-glycerate: step 1/3. Functionally, catalyzes the reversible oxidation of 3-phospho-D-glycerate to 3-phosphonooxypyruvate, the first step of the phosphorylated L-serine biosynthesis pathway. Also catalyzes the reversible oxidation of 2-hydroxyglutarate to 2-oxoglutarate and the reversible oxidation of (S)-malate to oxaloacetate. The chain is D-3-phosphoglycerate dehydrogenase (PHGDH) from Homo sapiens (Human).